Reading from the N-terminus, the 259-residue chain is Expansin-B4 (259 aa).

The N-terminal stretch at 1–23 (MASSQRYFALLALFAVSLKFCYC) is a signal peptide. A glycan (N-linked (GlcNAc...) asparagine) is linked at N25. One can recognise an Expansin-like EG45 domain in the interval 51–161 (GGACGYGSAV…KRAACLYRGT (111 aa)). Disulfide bonds link C54/C83, C86/C156, and C91/C97. The Expansin-like CBD domain occupies 174-255 (YYISFVVEYE…NWKPDESYRS (82 aa)).

The protein belongs to the expansin family. Expansin B subfamily.

It is found in the secreted. The protein resides in the cell wall. The protein localises to the membrane. Functionally, may cause loosening and extension of plant cell walls by disrupting non-covalent bonding between cellulose microfibrils and matrix glucans. No enzymatic activity has been found. The protein is Expansin-B4 (EXPB4) of Arabidopsis thaliana (Mouse-ear cress).